The following is a 347-amino-acid chain: Gas vesicle ATPase GvpN1 (347 aa).

Positions 1–11 (MTNESRKRKVR) are enriched in basic residues. Residues 1–64 (MTNESRKRKV…EGFVPEEQSF (64 aa)) are disordered. Over residues 18-55 (SRGDKKQGRSQSRDDKEIERLERQNDARGQESSTHVDE) the composition is skewed to basic and acidic residues. 91 to 98 (GPTGCGKT) provides a ligand contact to ATP.

The protein belongs to the CbbQ/NirQ/NorQ/GpvN family. As to quaternary structure, forms homodimers, forms a GvpN1-GvpO1 heterodimer, interacts with GvpC1 (via the latter's C-terminus) and GvpL, might interact with GvpA1.

Its subcellular location is the gas vesicle. The protein resides in the cytoplasm. It catalyses the reaction ATP + H2O = ADP + phosphate + H(+). Its function is as follows. An ATPase that functions in gas vesicle formation. A minor component of the gas vesicle, also found in soluble extracts. Probably enhances gas vesicle formation. Gas vesicles are hollow, gas filled proteinaceous nanostructures found in several microbial planktonic microorganisms. They allow positioning of halobacteria at the optimal depth for growth in the poorly aerated, shallow brine pools of their habitat. Functionally, expression of a 9.5 kb p-vac DNA fragment containing 2 divergently transcribed regions (gvpD-gvpE-gvpF-gvpG-gvpH-gvpI-gvpJ-gvpK-gvpL-gvpM and gvpA-gvpC-gvpN-gvpO) allows H.volcanii to produce gas vesicles. A similar region restores gas vesicle production in H.halobium without the p-vac locus, but which still have the c-vac locus. The polypeptide is Gas vesicle ATPase GvpN1 (gvpN11) (Halobacterium salinarum (strain ATCC 700922 / JCM 11081 / NRC-1) (Halobacterium halobium)).